Reading from the N-terminus, the 230-residue chain is Cytidylate kinase (230 aa).

Residue 12-20 (GPSGAGKGT) coordinates ATP.

Belongs to the cytidylate kinase family. Type 1 subfamily.

Its subcellular location is the cytoplasm. It carries out the reaction CMP + ATP = CDP + ADP. The catalysed reaction is dCMP + ATP = dCDP + ADP. The polypeptide is Cytidylate kinase (Shewanella piezotolerans (strain WP3 / JCM 13877)).